Here is a 441-residue protein sequence, read N- to C-terminus: Deoxyguanosinetriphosphate triphosphohydrolase-like protein (441 aa).

Positions 59 to 250 (RLTHSLEVSQ…MELADDTAYA (192 aa)) constitute an HD domain.

The protein belongs to the dGTPase family. Type 2 subfamily.

This Shewanella loihica (strain ATCC BAA-1088 / PV-4) protein is Deoxyguanosinetriphosphate triphosphohydrolase-like protein.